A 780-amino-acid chain; its full sequence is Cullin-1 (780 aa).

Residues 710-771 (DRKSVISACI…EKEYMLRTEG (62 aa)) form the Cullin neddylation domain. A Glycyl lysine isopeptide (Lys-Gly) (interchain with G-Cter in NEDD8) cross-link involves residue lysine 724.

Belongs to the cullin family. Component of an SCF (SKP1-CUL1-F-box protein) E3 ubiquitin ligase complex composed of cul-1, fsn-1, rpm-1 and skr-1. Interacts with Skp1-related proteins skr-1, skr-2, skr-3, skr-4, skr-7, skr-8, skr-9 and skr-10. Post-translationally, neddylated; which enhances the ubiquitination activity of SCF. As to expression, ubiquitous.

The protein resides in the cytoplasm. Its pathway is protein modification; protein ubiquitination. Its function is as follows. Probable core component of multiple cullin-RING-based SCF (SKP1-CUL1-F-box) E3 ubiquitin-protein ligase complexes which mediate the ubiquitination and subsequent proteasomal degradation of target proteins. As a scaffold protein may contribute to catalysis through positioning of the substrate and the ubiquitin-conjugating enzyme. Required for developmentally programmed transitions from the G1 phase of the cell cycle to the G0 phase or the apoptotic pathway. In Caenorhabditis elegans, this protein is Cullin-1 (cul-1).